The chain runs to 474 residues: ATP synthase subunit beta 1 (474 aa).

157-164 lines the ATP pocket; the sequence is GGAGVGKT.

The protein belongs to the ATPase alpha/beta chains family. F-type ATPases have 2 components, CF(1) - the catalytic core - and CF(0) - the membrane proton channel. CF(1) has five subunits: alpha(3), beta(3), gamma(1), delta(1), epsilon(1). CF(0) has three main subunits: a(1), b(2) and c(9-12). The alpha and beta chains form an alternating ring which encloses part of the gamma chain. CF(1) is attached to CF(0) by a central stalk formed by the gamma and epsilon chains, while a peripheral stalk is formed by the delta and b chains.

It localises to the cell inner membrane. The catalysed reaction is ATP + H2O + 4 H(+)(in) = ADP + phosphate + 5 H(+)(out). Produces ATP from ADP in the presence of a proton gradient across the membrane. The catalytic sites are hosted primarily by the beta subunits. The polypeptide is ATP synthase subunit beta 1 (Albidiferax ferrireducens (strain ATCC BAA-621 / DSM 15236 / T118) (Rhodoferax ferrireducens)).